The sequence spans 89 residues: Large ribosomal subunit protein bL28 (89 aa).

This sequence belongs to the bacterial ribosomal protein bL28 family.

The chain is Large ribosomal subunit protein bL28 from Chlamydia trachomatis serovar A (strain ATCC VR-571B / DSM 19440 / HAR-13).